We begin with the raw amino-acid sequence, 127 residues long: Glycine cleavage system H protein (127 aa).

The Lipoyl-binding domain maps to 22 to 104 (NVRIGITDYA…YDKAWMIVVK (83 aa)). N6-lipoyllysine is present on Lys63.

Belongs to the GcvH family. The glycine cleavage system is composed of four proteins: P, T, L and H. Requires (R)-lipoate as cofactor.

Functionally, the glycine cleavage system catalyzes the degradation of glycine. The H protein shuttles the methylamine group of glycine from the P protein to the T protein. Is also involved in protein lipoylation via its role as an octanoyl/lipoyl carrier protein intermediate. The chain is Glycine cleavage system H protein from Geobacillus kaustophilus (strain HTA426).